Consider the following 233-residue polypeptide: Large ribosomal subunit protein uL1 (233 aa).

Belongs to the universal ribosomal protein uL1 family. In terms of assembly, part of the 50S ribosomal subunit.

Its function is as follows. Binds directly to 23S rRNA. Forms the L1 stalk. Unlike the case in the Thermus thermophilus 70S ribosome, this protein is not seen to block the exit path of the E site tRNA. It is clear that the protein in the structure is flexible however, so this is probably due to its position in these crystals. Functionally, protein L1 is also a translational repressor protein, it controls the translation of the L11 operon by binding to its mRNA. The sequence is that of Large ribosomal subunit protein uL1 (rplA) from Deinococcus radiodurans (strain ATCC 13939 / DSM 20539 / JCM 16871 / CCUG 27074 / LMG 4051 / NBRC 15346 / NCIMB 9279 / VKM B-1422 / R1).